The primary structure comprises 169 residues: Photosystem I assembly protein Ycf3 (169 aa).

TPR repeat units lie at residues 35–68, 72–105, and 120–153; these read AFTY…EIDP, SYIL…NPSL, and GEQA…APGN.

Belongs to the Ycf3 family.

The protein resides in the plastid. It is found in the chloroplast thylakoid membrane. Functionally, essential for the assembly of the photosystem I (PSI) complex. May act as a chaperone-like factor to guide the assembly of the PSI subunits. This chain is Photosystem I assembly protein Ycf3, found in Huperzia lucidula (Shining clubmoss).